The following is a 120-amino-acid chain: Large ribosomal subunit protein uL18 (120 aa).

The disordered stretch occupies residues methionine 1–arginine 26. A compositionally biased stretch (basic residues) spans asparagine 8–glycine 23.

Belongs to the universal ribosomal protein uL18 family. As to quaternary structure, part of the 50S ribosomal subunit; part of the 5S rRNA/L5/L18/L25 subcomplex. Contacts the 5S and 23S rRNAs.

Functionally, this is one of the proteins that bind and probably mediate the attachment of the 5S RNA into the large ribosomal subunit, where it forms part of the central protuberance. In Bradyrhizobium diazoefficiens (strain JCM 10833 / BCRC 13528 / IAM 13628 / NBRC 14792 / USDA 110), this protein is Large ribosomal subunit protein uL18.